We begin with the raw amino-acid sequence, 93 residues long: Mitochondrial import inner membrane translocase subunit TIM9 (93 aa).

Positions 43 to 67 match the Twin CX3C motif motif; sequence CFVDCVDSFTRKSLQKQEETCVMRC. 2 disulfide bridges follow: Cys43/Cys67 and Cys47/Cys63.

The protein belongs to the small Tim family. As to quaternary structure, heterohexamer; composed of 3 copies of TIM9 and 3 copies of TIM10, named soluble 70 kDa complex. The complex associates with the TIM22 component of the TIM22 complex. Interacts with multi-pass transmembrane proteins in transit. Expressed in roots, flowers, young cotyledons and leaves.

It localises to the mitochondrion intermembrane space. Its function is as follows. Mitochondrial intermembrane chaperone that participates in the import and insertion of multi-pass transmembrane proteins into the mitochondrial inner membrane. May also be required for the transfer of beta-barrel precursors from the TOM complex to the sorting and assembly machinery (SAM complex) of the outer membrane. Acts as a chaperone-like protein that protects the hydrophobic precursors from aggregation and guide them through the mitochondrial intermembrane space. This chain is Mitochondrial import inner membrane translocase subunit TIM9 (TIM9), found in Arabidopsis thaliana (Mouse-ear cress).